The primary structure comprises 88 residues: Large ribosomal subunit protein bL27 (88 aa).

The disordered stretch occupies residues 1–22 (MAQKKAGGSSRNGRDSAGRRLG).

The protein belongs to the bacterial ribosomal protein bL27 family.

In Gluconobacter oxydans (strain 621H) (Gluconobacter suboxydans), this protein is Large ribosomal subunit protein bL27.